A 392-amino-acid chain; its full sequence is Streptogrisin-D (392 aa).

The first 64 residues, 1 to 64 (MCVSRRRNSG…AGFTFQTANA (64 aa)), serve as a signal peptide directing secretion. Residues 65-204 (SDDVPAFGAK…NRTAGEFTPL (140 aa)) constitute a propeptide that is removed on maturation. Cys218 and Cys238 form a disulfide bridge. Active-site charge relay system residues include His237, Asp266, and Ser348. An intrachain disulfide couples Cys342 to Cys369.

Belongs to the peptidase S1 family. As to quaternary structure, homodimer.

Its function is as follows. Has a primary specificity for large aliphatic or aromatic amino acids. The polypeptide is Streptogrisin-D (sprD) (Streptomyces griseus).